The chain runs to 152 residues: Cell division protein SepF (152 aa).

The segment covering 23–32 (EVAREPEPMQ) has biased composition (basic and acidic residues). Residues 23-42 (EVAREPEPMQKKTKKEKPSK) are disordered.

It belongs to the SepF family. In terms of assembly, homodimer. Interacts with FtsZ.

Its subcellular location is the cytoplasm. Functionally, cell division protein that is part of the divisome complex and is recruited early to the Z-ring. Probably stimulates Z-ring formation, perhaps through the cross-linking of FtsZ protofilaments. Its function overlaps with FtsA. The chain is Cell division protein SepF from Listeria innocua serovar 6a (strain ATCC BAA-680 / CLIP 11262).